Here is a 316-residue protein sequence, read N- to C-terminus: Porphobilinogen deaminase (316 aa).

C242 carries the S-(dipyrrolylmethanemethyl)cysteine modification.

This sequence belongs to the HMBS family. In terms of assembly, monomer. Requires dipyrromethane as cofactor.

The catalysed reaction is 4 porphobilinogen + H2O = hydroxymethylbilane + 4 NH4(+). Its pathway is porphyrin-containing compound metabolism; protoporphyrin-IX biosynthesis; coproporphyrinogen-III from 5-aminolevulinate: step 2/4. In terms of biological role, tetrapolymerization of the monopyrrole PBG into the hydroxymethylbilane pre-uroporphyrinogen in several discrete steps. The sequence is that of Porphobilinogen deaminase from Thioalkalivibrio sulfidiphilus (strain HL-EbGR7).